The following is a 484-amino-acid chain: Glutamyl-tRNA(Gln) amidotransferase subunit A (484 aa).

Residues lysine 76 and serine 151 each act as charge relay system in the active site. Catalysis depends on serine 175, which acts as the Acyl-ester intermediate.

It belongs to the amidase family. GatA subfamily. In terms of assembly, heterotrimer of A, B and C subunits.

It catalyses the reaction L-glutamyl-tRNA(Gln) + L-glutamine + ATP + H2O = L-glutaminyl-tRNA(Gln) + L-glutamate + ADP + phosphate + H(+). Functionally, allows the formation of correctly charged Gln-tRNA(Gln) through the transamidation of misacylated Glu-tRNA(Gln) in organisms which lack glutaminyl-tRNA synthetase. The reaction takes place in the presence of glutamine and ATP through an activated gamma-phospho-Glu-tRNA(Gln). In Cellvibrio japonicus (strain Ueda107) (Pseudomonas fluorescens subsp. cellulosa), this protein is Glutamyl-tRNA(Gln) amidotransferase subunit A.